The following is a 208-amino-acid chain: Large ribosomal subunit protein uL3 (208 aa).

Belongs to the universal ribosomal protein uL3 family. In terms of assembly, part of the 50S ribosomal subunit. Forms a cluster with proteins L14 and L19.

Functionally, one of the primary rRNA binding proteins, it binds directly near the 3'-end of the 23S rRNA, where it nucleates assembly of the 50S subunit. The chain is Large ribosomal subunit protein uL3 from Salinibacter ruber (strain DSM 13855 / M31).